A 1088-amino-acid polypeptide reads, in one-letter code: Sterol regulatory element-binding protein 2 (1088 aa).

Residues 1-38 are transcriptional activation (acidic); sequence METLTELGDELTLGDIDEMLQFVSNQVGEFPDLFEEQL. Topologically, residues 1–440 are cytoplasmic; that stretch reads METLTELGDE…TGLGMMDRSR (440 aa). Residues 59 to 70 are compositionally biased toward polar residues; it reads AAQQPYTTSAPQ. The segment at 59 to 87 is disordered; the sequence is AAQQPYTTSAPQPQLLPVKAPPQATPQRT. One can recognise a bHLH domain in the interval 290 to 340; that stretch reads ERRTTHNIIEKRYRSSINDKIMELKDLVMGTDAKMHKSGVLKKAIDYIKYL. Positions 340–361 are leucine-zipper; it reads LQQVNQKLRQENMALKLANQKN. The segment at 392 to 431 is disordered; it reads SPPASDSGSPAVFSPYSVDSEPGSPLLDDEKVKDEPDSPT. The helical transmembrane segment at 441–461 threads the bilayer; the sequence is MLLCTMTFLCLSFNPLTSLLH. Over 462-494 the chain is Lumenal; the sequence is PESGQYSERAVQHGTGRTMLGVEMSGFYGSWFD. The helical transmembrane segment at 495–515 threads the bilayer; sequence WLIPTIILWLVNGVIVLSVFM. Topologically, residues 516–1088 are cytoplasmic; it reads KLLIHGEPVT…LSGGTAMAAS (573 aa).

The protein belongs to the SREBP family. In terms of assembly, forms a tight complex with scap, the SCAP-SREBP complex, in the endoplasmic reticulum membrane. Homodimer; efficient DNA binding of the soluble transcription factor fragment requires dimerization with another bHLH protein. Post-translationally, processed in the Golgi apparatus, releasing the protein from the membrane. At low cholesterol the SCAP-SREBP complex is recruited into COPII vesicles for export from the endoplasmic reticulum. In the Golgi, complex SREBPs are cleaved sequentially by site-1 (MBTPS1, S1P) and site-2 (MBTPS2, S2P) proteases. The first cleavage by site-1 protease occurs within the luminal loop, the second cleavage by site-2 protease occurs within the first transmembrane domain, releasing the transcription factor from the Golgi membrane.

The protein localises to the endoplasmic reticulum membrane. Its subcellular location is the golgi apparatus membrane. It is found in the cytoplasmic vesicle. It localises to the COPII-coated vesicle membrane. The protein resides in the nucleus. Functionally, precursor of the transcription factor form (Processed sterol regulatory element-binding protein 2), which is embedded in the endoplasmic reticulum membrane. Low sterol concentrations promote processing of this form, releasing the transcription factor form that translocates into the nucleus and activates transcription of genes involved in cholesterol biosynthesis. In terms of biological role, key transcription factor that regulates expression of genes involved in cholesterol biosynthesis. Binds to the sterol regulatory element 1 (SRE-1) (5'-ATCACCCCAC-3'). Has dual sequence specificity binding to both an E-box motif (5'-ATCACGTGA-3') and to SRE-1 (5'-ATCACCCCAC-3'). Regulates transcription of genes related to cholesterol synthesis pathway. The sequence is that of Sterol regulatory element-binding protein 2 from Xenopus laevis (African clawed frog).